A 513-amino-acid polypeptide reads, in one-letter code: Probable helicase MJ1565 (513 aa).

Residues R151, 160-165 (GMGKSN), and 467-468 (KV) each bind ATP.

The protein belongs to the HerA family.

The catalysed reaction is Couples ATP hydrolysis with the unwinding of duplex DNA at the replication fork by translocating in the 5'-3' direction. This creates two antiparallel DNA single strands (ssDNA). The leading ssDNA polymer is the template for DNA polymerase III holoenzyme which synthesizes a continuous strand.. It catalyses the reaction ATP + H2O = ADP + phosphate + H(+). The enzyme catalyses Couples ATP hydrolysis with the unwinding of duplex DNA by translocating in the 3'-5' direction.. Its function is as follows. A probably bidirectional DNA helicase. The sequence is that of Probable helicase MJ1565 from Methanocaldococcus jannaschii (strain ATCC 43067 / DSM 2661 / JAL-1 / JCM 10045 / NBRC 100440) (Methanococcus jannaschii).